The chain runs to 607 residues: Protein PLASTID MOVEMENT IMPAIRED 2 (607 aa).

Coiled coils occupy residues K66–L295 and M329–R445.

Belongs to the WEB family. In terms of assembly, interacts with WEB1. As to expression, ubiquitous but preferentially in chloroplast-containing tissues.

It is found in the cytoplasm. Required for the chloroplast avoidance response under high intensity blue light. This avoidance response consists in the relocation of chloroplasts on the anticlinal side of exposed cells. Acts in association with WEB1 to maintain the velocity of chloroplast photorelocation movement via cp-actin filaments regulation. The chain is Protein PLASTID MOVEMENT IMPAIRED 2 (PMI2) from Arabidopsis thaliana (Mouse-ear cress).